Reading from the N-terminus, the 355-residue chain is uncharacterized protein (355 aa).

The signal sequence occupies residues 1 to 27 (MESPIRTARRTLPLLIGATCLVLALTG). A lipid anchor (N-palmitoyl cysteine) is attached at C28. C28 carries the S-diacylglycerol cysteine lipid modification. Positions 33–53 (GPAQARPTPSASTSPKQAPAL) are disordered. Positions 39-48 (PTPSASTSPK) are enriched in polar residues.

The protein localises to the cell membrane. This is an uncharacterized protein from Streptomyces coelicolor (strain ATCC BAA-471 / A3(2) / M145).